We begin with the raw amino-acid sequence, 213 residues long: Maleamate amidohydrolase (213 aa).

Cysteine 154 serves as the catalytic Nucleophile.

The protein belongs to the isochorismatase family.

It carries out the reaction maleamate + H2O = maleate + NH4(+). Its pathway is cofactor degradation; nicotinate degradation. In terms of biological role, maleamate amidase that transforms maleamate into maleate and ammonia in the aerobic nicotinate degradation pathway. The chain is Maleamate amidohydrolase (nicF) from Pseudomonas putida (strain ATCC 47054 / DSM 6125 / CFBP 8728 / NCIMB 11950 / KT2440).